We begin with the raw amino-acid sequence, 29 residues long: Photosystem I reaction center subunit XII (29 aa).

A helical transmembrane segment spans residues 7-24 (FVALLLALVPAVLAYRLG).

The protein belongs to the PsaM family.

The protein resides in the cellular thylakoid membrane. The sequence is that of Photosystem I reaction center subunit XII from Synechococcus sp. (strain ATCC 27144 / PCC 6301 / SAUG 1402/1) (Anacystis nidulans).